The chain runs to 321 residues: tRNA uridine(34) hydroxylase (321 aa).

One can recognise a Rhodanese domain in the interval 123–217 (SDPDVTVIDT…YLEEVPEGNS (95 aa)). Cys177 acts as the Cysteine persulfide intermediate in catalysis. Residues 294-308 (RKGELHIGDRADIAK) are compositionally biased toward basic and acidic residues. The segment at 294 to 321 (RKGELHIGDRADIAKSRTTQGAPSADGE) is disordered.

It belongs to the TrhO family.

It carries out the reaction uridine(34) in tRNA + AH2 + O2 = 5-hydroxyuridine(34) in tRNA + A + H2O. Catalyzes oxygen-dependent 5-hydroxyuridine (ho5U) modification at position 34 in tRNAs. The sequence is that of tRNA uridine(34) hydroxylase from Teredinibacter turnerae (strain ATCC 39867 / T7901).